The following is a 93-amino-acid chain: Large ribosomal subunit protein uL23cz/uL23cy (93 aa).

It belongs to the universal ribosomal protein uL23 family. Part of the 50S ribosomal subunit.

The protein localises to the plastid. The protein resides in the chloroplast. Its function is as follows. Binds to 23S rRNA. The protein is Large ribosomal subunit protein uL23cz/uL23cy (rpl23-A) of Eucalyptus globulus subsp. globulus (Tasmanian blue gum).